The following is a 101-amino-acid chain: Small ribosomal subunit protein uS10 (101 aa).

The protein belongs to the universal ribosomal protein uS10 family. As to quaternary structure, part of the 30S ribosomal subunit.

Involved in the binding of tRNA to the ribosomes. The polypeptide is Small ribosomal subunit protein uS10 (Phocaeicola vulgatus (strain ATCC 8482 / DSM 1447 / JCM 5826 / CCUG 4940 / NBRC 14291 / NCTC 11154) (Bacteroides vulgatus)).